Reading from the N-terminus, the 361-residue chain is Divinyl chlorophyll a/b light-harvesting protein PcbE (361 aa).

Helical transmembrane passes span 27–47 (FIGS…ANTL), 88–108 (VAFV…AGLL), 149–169 (FILG…VEWA), 210–230 (VMGG…FHIA), 250–270 (AVLS…AFWC), and 315–335 (LSNV…WHAI).

This sequence belongs to the PsbB/PsbC family. IsiA/Pcb subfamily. In terms of assembly, the antenna complex consists of divinyl chlorophylls (a and b) and divinyl chlorophyll a/b binding proteins and binds more divinyl chlorophyll b than does the antenna complex from high-light-adapted Prochlorococcus. Requires divinyl chlorophyll a as cofactor. Divinyl chlorophyll b serves as cofactor.

The protein localises to the cellular thylakoid membrane. In terms of biological role, the antenna complex functions as a light receptor, it captures and delivers excitation energy to photosystems II and I. The Prochlorales pcb genes are not related to higher plant LHCs. The polypeptide is Divinyl chlorophyll a/b light-harvesting protein PcbE (pcbE) (Prochlorococcus marinus (strain SARG / CCMP1375 / SS120)).